The chain runs to 398 residues: MKQLTILGSTGSIGCSTLDVVRHNPEHFRVVALVAGKNVTRMVEQCLEFSPRYAVMDDEASAKLLKTMLQQQGSRTEVLSGQQAACDMAALEEVDQVMAAIVGAAGLLPTLAAIRAGKTILLANKESLVTCGRLFMDAVKQSKAQLLPVDSEHNAIFQSLPQPIQHNLGYADLEQNGVVSILLTGSGGPFRETPLRDLATMTPDQACRHPNWSMGRKISVDSATMMNKGLEYIEARWLFNASASQMEVLIHPQSVIHSMVRYQDGSVLAQLGEPDMRTPIAHTMAWPNRVNSGVKPLDFCKLSALTFAAPDYERYPCLKLAMEAFEQGQAATTALNAANEITVAAFLAQQIRFTDIAALNLSVLEKMDMREPQCVDDVLSVDANASEVARKEVMRLAS.

Residues Thr-10, Gly-11, Ser-12, Ile-13, Gly-36, Lys-37, Asn-38, and Asn-124 each coordinate NADPH. Lys-125 contacts 1-deoxy-D-xylulose 5-phosphate. Residue Glu-126 participates in NADPH binding. Residue Asp-150 participates in Mn(2+) binding. 4 residues coordinate 1-deoxy-D-xylulose 5-phosphate: Ser-151, Glu-152, Ser-186, and His-209. Mn(2+) is bound at residue Glu-152. Gly-215 is an NADPH binding site. The 1-deoxy-D-xylulose 5-phosphate site is built by Ser-222, Asn-227, Lys-228, and Glu-231. Mn(2+) is bound at residue Glu-231.

This sequence belongs to the DXR family. As to quaternary structure, homodimer. The cofactor is Mg(2+). It depends on Mn(2+) as a cofactor.

It carries out the reaction 2-C-methyl-D-erythritol 4-phosphate + NADP(+) = 1-deoxy-D-xylulose 5-phosphate + NADPH + H(+). The protein operates within isoprenoid biosynthesis; isopentenyl diphosphate biosynthesis via DXP pathway; isopentenyl diphosphate from 1-deoxy-D-xylulose 5-phosphate: step 1/6. In terms of biological role, catalyzes the NADPH-dependent rearrangement and reduction of 1-deoxy-D-xylulose-5-phosphate (DXP) to 2-C-methyl-D-erythritol 4-phosphate (MEP). This is 1-deoxy-D-xylulose 5-phosphate reductoisomerase from Shigella flexneri.